The sequence spans 193 residues: Protein Syd (193 aa).

The protein belongs to the Syd family.

The protein localises to the cell inner membrane. In terms of biological role, interacts with the SecY protein in vivo. May bind preferentially to an uncomplexed state of SecY, thus functioning either as a chelating agent for excess SecY in the cell or as a regulatory factor that negatively controls the translocase function. The polypeptide is Protein Syd (Tolumonas auensis (strain DSM 9187 / NBRC 110442 / TA 4)).